A 61-amino-acid polypeptide reads, in one-letter code: Large ribosomal subunit protein bL32 (61 aa).

The segment covering 1-16 (MAVPKRKTSPSKRGMR) has biased composition (basic residues). Residues 1–61 (MAVPKRKTSP…RSVLTPKNSG (61 aa)) form a disordered region. A compositionally biased stretch (basic and acidic residues) spans 28-44 (VEDKDSGELRRPHHIDL).

The protein belongs to the bacterial ribosomal protein bL32 family.

This is Large ribosomal subunit protein bL32 from Bartonella bacilliformis (strain ATCC 35685 / KC583 / Herrer 020/F12,63).